The primary structure comprises 232 residues: NKG2-D type II integral membrane protein (232 aa).

Over 1-66 (MALIRDRKSH…IEKLKISPMF (66 aa)) the chain is Cytoplasmic. The chain crosses the membrane as a helical; Signal-anchor for type II membrane protein span at residues 67 to 89 (VVRVLAIALAIRFTLNTLMWLAI). The Extracellular portion of the chain corresponds to 90 to 232 (FKETFQPVLC…NTYICMKRAV (143 aa)). 2 disulfides stabilise this stretch: cysteine 112–cysteine 121 and cysteine 115–cysteine 126. The 107-residue stretch at 122-228 (HRNNCYQFFN…CANLNTYICM (107 aa)) folds into the C-type lectin domain. N-linked (GlcNAc...) asparagine glycosylation is found at asparagine 137, asparagine 147, and asparagine 179. Cystine bridges form between cysteine 143–cysteine 227 and cysteine 205–cysteine 219.

In terms of assembly, homodimer; disulfide-linked. Heterohexamer composed of two subunits of KLRK1 and four subunits of HCST/DAP10. Isoform 1 (via transmembrane domain) interacts with HCST/DAP10; the interaction is required for KLRK1 cell surface expression on activated CD8(+) T-cells, but is dispensable on activated TYROBP-expressing NK cells. Isoform 2 (via transmembrane domain) interacts with HCST/DAP10 (via transmembrane domain); the interaction is required for KLRK1 NK cell surface expression and induces NK cell-mediated cytotoxicity. Isoform 2 (via transmembrane domain) interacts with TYROBP (via transmembrane domain); the interaction is required for KLRK1 NK cell surface expression and induce NK cell-mediated cytotoxicity and cytokine secretion. Isoform 1 does not interact with TYROBP. Interacts with CEACAM1; recruits PTPN6 that dephosphorylates VAV1. In terms of tissue distribution, expressed in natural killer (NK) cells, activated CD8(+) alpha-beta and gamma-delta T-cells and natural killer T (NKT) cells (at protein level). May be expressed on dendritic cell (DC). Isoform 1 is strongly expressed in natural killer (NK) cells. Isoform 2 is weakly expressed in natural killer (NK) cells. Isoform 1 and isoform 2 are expressed in stimulated, but not in unstimulated, CD8(+) T-cells and macrophages.

It is found in the cell membrane. Functionally, functions as an activating and costimulatory receptor involved in immunosurveillance upon binding to various cellular stress-inducible ligands displayed at the surface of autologous tumor cells and virus-infected cells. Provides both stimulatory and costimulatory innate immune responses on activated killer (NK) cells, leading to cytotoxic activity. Acts as a costimulatory receptor for T-cell receptor (TCR) in CD8(+) T-cell-mediated adaptive immune responses by amplifying T-cell activation. Stimulates perforin-mediated elimination of ligand-expressing tumor cells. Signaling involves calcium influx, culminating in the expression of TNF-alpha. Participates in NK cell-mediated bone marrow graft rejection. May play a regulatory role in differentiation and survival of NK cells. Binds to ligands belonging to various subfamilies of MHC class I-related glycoproteins including RAET1A, RAET1B, RAET1C, RAET1D, RAET1E, H60 and MULT1. The chain is NKG2-D type II integral membrane protein (Klrk1) from Mus musculus (Mouse).